A 240-amino-acid polypeptide reads, in one-letter code: Probable septum site-determining protein MinC (240 aa).

This sequence belongs to the MinC family. Interacts with MinD and FtsZ.

Its function is as follows. Cell division inhibitor that blocks the formation of polar Z ring septums. Rapidly oscillates between the poles of the cell to destabilize FtsZ filaments that have formed before they mature into polar Z rings. Prevents FtsZ polymerization. In Acinetobacter baylyi (strain ATCC 33305 / BD413 / ADP1), this protein is Probable septum site-determining protein MinC.